A 383-amino-acid chain; its full sequence is Serine protease 23 (383 aa).

Positions 1-19 (MAGIPGLLFLLFLLLCAVG) are cleaved as a signal peptide. N-linked (GlcNAc...) asparagine glycosylation is present at N93. The interval 108–127 (SSGGGAQHRDSGSSGKSRRK) is disordered. Position 109 is a phosphoserine; by FAM20C (S109). A disulfide bond links C160 and C176. H175 serves as the catalytic Charge relay system. N-linked (GlcNAc...) asparagine glycosylation occurs at N207. Catalysis depends on charge relay system residues D240 and S316.

Belongs to the peptidase S1 family.

It is found in the secreted. This chain is Serine protease 23 (PRSS23), found in Macaca mulatta (Rhesus macaque).